A 101-amino-acid chain; its full sequence is Small ribosomal subunit protein uS14 (101 aa).

This sequence belongs to the universal ribosomal protein uS14 family. Part of the 30S ribosomal subunit. Contacts proteins S3 and S10.

In terms of biological role, binds 16S rRNA, required for the assembly of 30S particles and may also be responsible for determining the conformation of the 16S rRNA at the A site. The sequence is that of Small ribosomal subunit protein uS14 from Ralstonia pickettii (strain 12J).